Reading from the N-terminus, the 282-residue chain is NAD(P)H-hydrate epimerase (282 aa).

A mitochondrion-targeting transit peptide spans 1–53 (MSGLRTLLGLGLLVAGSRLPRIASRQSVCRAGPIWWGTQHRSSETMASAAVKY). The region spanning 59–269 (AQAVDEELFN…ALEKKYQLNL (211 aa)) is the YjeF N-terminal domain. 113 to 117 (NNGGD) provides a ligand contact to (6S)-NADPHX. Residue Asn-114 participates in K(+) binding. The residue at position 138 (Lys-138) is an N6-succinyllysine. Asp-179 is a K(+) binding site. (6S)-NADPHX-binding positions include 183–189 (GFSFKGD) and Asp-212. A K(+)-binding site is contributed by Ser-215.

Belongs to the NnrE/AIBP family. In terms of assembly, homodimer. Interacts with APOA1 and APOA2. Requires K(+) as cofactor. In terms of processing, undergoes physiological phosphorylation during sperm capacitation, downstream to PKA activation.

It is found in the mitochondrion. Its subcellular location is the secreted. It catalyses the reaction (6R)-NADHX = (6S)-NADHX. The enzyme catalyses (6R)-NADPHX = (6S)-NADPHX. Catalyzes the epimerization of the S- and R-forms of NAD(P)HX, a damaged form of NAD(P)H that is a result of enzymatic or heat-dependent hydration. This is a prerequisite for the S-specific NAD(P)H-hydrate dehydratase to allow the repair of both epimers of NAD(P)HX. Accelerates cholesterol efflux from endothelial cells to high-density lipoprotein (HDL) and thereby regulates angiogenesis. This chain is NAD(P)H-hydrate epimerase, found in Rattus norvegicus (Rat).